The primary structure comprises 489 residues: Tyrosine-protein phosphatase MSG5 (489 aa).

Residues 1 to 18 (MQFHSDKQHLDSKTDIDF) show a composition bias toward basic and acidic residues. A disordered region spans residues 1–30 (MQFHSDKQHLDSKTDIDFKPNSPRSLQNRN). S22, S98, and S151 each carry phosphoserine. T178 is subject to Phosphothreonine. In terms of domain architecture, Tyrosine-protein phosphatase spans 233 to 375 (GPLLVLPPNL…LMEWGTMLSK (143 aa)). Catalysis depends on C319, which acts as the Phosphocysteine intermediate. Disordered regions lie at residues 375–401 (KNSP…VSST) and 419–489 (LSSS…MFLP). A compositionally biased stretch (low complexity) spans 419–450 (LSSSPNDSSVNSSEVTPRTPATLTGARTALAT). A compositionally biased stretch (basic and acidic residues) spans 451–460 (ERGEDDEHCK).

The protein belongs to the protein-tyrosine phosphatase family. Non-receptor class dual specificity subfamily.

The enzyme catalyses O-phospho-L-tyrosyl-[protein] + H2O = L-tyrosyl-[protein] + phosphate. In terms of biological role, dual specificity phosphatase that dephosphorylates MAP kinase FUS3 on both a Tyr and a Ser or Thr. Has a role in adaptation to pheromone. In Saccharomyces cerevisiae (strain ATCC 204508 / S288c) (Baker's yeast), this protein is Tyrosine-protein phosphatase MSG5 (MSG5).